We begin with the raw amino-acid sequence, 156 residues long: Small ribosomal subunit protein uS7 (156 aa).

The protein belongs to the universal ribosomal protein uS7 family. As to quaternary structure, part of the 30S ribosomal subunit. Contacts proteins S9 and S11.

One of the primary rRNA binding proteins, it binds directly to 16S rRNA where it nucleates assembly of the head domain of the 30S subunit. Is located at the subunit interface close to the decoding center, probably blocks exit of the E-site tRNA. The sequence is that of Small ribosomal subunit protein uS7 from Campylobacter fetus subsp. fetus (strain 82-40).